The sequence spans 337 residues: Transaldolase (337 aa).

The Nuclear localization signal signature appears at 1-10 (MSSSPVKRQR). Residue Lys115 is modified to N6-acetyllysine. Residue Lys142 is the Schiff-base intermediate with substrate of the active site. Lys219 is subject to N6-acetyllysine. Phosphoserine occurs at positions 237 and 256. N6-acetyllysine is present on residues Lys269, Lys286, and Lys321.

This sequence belongs to the transaldolase family. Type 1 subfamily. In terms of assembly, homodimer. Heterodimer with isoform 2. Interacts with KPNA1 and KPNA4.

The protein resides in the nucleus. It is found in the cytoplasm. The catalysed reaction is D-sedoheptulose 7-phosphate + D-glyceraldehyde 3-phosphate = D-erythrose 4-phosphate + beta-D-fructose 6-phosphate. Its pathway is carbohydrate degradation; pentose phosphate pathway; D-glyceraldehyde 3-phosphate and beta-D-fructose 6-phosphate from D-ribose 5-phosphate and D-xylulose 5-phosphate (non-oxidative stage): step 2/3. Functionally, catalyzes the rate-limiting step of the non-oxidative phase in the pentose phosphate pathway. Catalyzes the reversible conversion of sedheptulose-7-phosphate and D-glyceraldehyde 3-phosphate into erythrose-4-phosphate and beta-D-fructose 6-phosphate. Not only acts as a pentose phosphate pathway enzyme, but also affects other metabolite pathways by altering its subcellular localization between the nucleus and the cytoplasm. This chain is Transaldolase, found in Homo sapiens (Human).